Consider the following 738-residue polypeptide: Catalase-peroxidase (738 aa).

A compositionally biased stretch (basic and acidic residues) spans 1–16; that stretch reads MSENHDAIVTDAKTEE. The segment at 1–37 is disordered; that stretch reads MSENHDAIVTDAKTEEAGGCPVAHGRAPHPTQGGGNR. Residues 108–231 constitute a cross-link (tryptophyl-tyrosyl-methioninium (Trp-Tyr) (with M-257)); the sequence is WHSAGTYRIS…LGAVQMGLIY (124 aa). The active-site Proton acceptor is the His-109. A cross-link (tryptophyl-tyrosyl-methioninium (Tyr-Met) (with W-108)) is located at residues 231–257; sequence YVNPEGPNGNPDPIAAARDIRETFGRM. His-272 contributes to the heme b binding site.

Belongs to the peroxidase family. Peroxidase/catalase subfamily. Homodimer or homotetramer. Requires heme b as cofactor. Post-translationally, formation of the three residue Trp-Tyr-Met cross-link is important for the catalase, but not the peroxidase activity of the enzyme.

The enzyme catalyses H2O2 + AH2 = A + 2 H2O. The catalysed reaction is 2 H2O2 = O2 + 2 H2O. Functionally, bifunctional enzyme with both catalase and broad-spectrum peroxidase activity. This Streptomyces ambofaciens protein is Catalase-peroxidase.